The chain runs to 360 residues: Decorin (360 aa).

The signal sequence occupies residues 1-16 (MKATIIFLLLAQVSWA). The propeptide occupies 17–30 (GPFQQRGLFDFMLE). Ser34 carries O-linked (Xyl...) (glycosaminoglycan) serine glycosylation. Intrachain disulfides connect Cys55–Cys61 and Cys59–Cys68. LRR repeat units lie at residues 74–94 (DKVP…NNKI), 95–118 (TEIK…NNKI), 119–142 (SKIS…KNHL), 143–163 (KELP…ENEI), 164–187 (TKVR…TNPL), 188–213 (KSSG…DTNI), 214–234 (TTIP…GNKI), 235–258 (TKVD…FNSI), 259–282 (SAVD…NNKL), 283–305 (IRVP…NNNI), 306–335 (SAVG…SNPV), and 336–360 (QYWE…GNYK). Asn212 carries N-linked (GlcNAc...) asparagine glycosylation. N-linked (GlcNAc...) asparagine glycosylation is found at Asn263 and Asn304. Cys314 and Cys347 are joined by a disulfide.

It belongs to the small leucine-rich proteoglycan (SLRP) family. SLRP class I subfamily. Binds to type I and type II collagen, fibronectin and TGF-beta. Forms a ternary complex with MFAP2 and ELN. Interacts with DPT. The attached glycosaminoglycan chain can be either chondroitin sulfate or dermatan sulfate depending upon the tissue of origin.

It localises to the secreted. The protein resides in the extracellular space. Its subcellular location is the extracellular matrix. Its function is as follows. May affect the rate of fibrils formation. This chain is Decorin (DCN), found in Canis lupus familiaris (Dog).